We begin with the raw amino-acid sequence, 156 residues long: MPRRRRIEPRKILPDPKFGSELLAKFINVLMVDGKKSIAESIVYGALETLSQRTGKEALEAFEIALENVRPTVEVKSRRVGGSTYQVPVEVRPTRRNALGMRWIVEAARKRGDKSMALRLANELSDASENKGAAVKKREDVHRMAEANKAFAHYRW.

This sequence belongs to the universal ribosomal protein uS7 family. In terms of assembly, part of the 30S ribosomal subunit. Contacts proteins S9 and S11.

Functionally, one of the primary rRNA binding proteins, it binds directly to 16S rRNA where it nucleates assembly of the head domain of the 30S subunit. Is located at the subunit interface close to the decoding center, probably blocks exit of the E-site tRNA. The chain is Small ribosomal subunit protein uS7 from Histophilus somni (strain 129Pt) (Haemophilus somnus).